The chain runs to 104 residues: Urease subunit beta (104 aa).

The protein belongs to the urease beta subunit family. Heterotrimer of UreA (gamma), UreB (beta) and UreC (alpha) subunits. Three heterotrimers associate to form the active enzyme.

The protein resides in the cytoplasm. The enzyme catalyses urea + 2 H2O + H(+) = hydrogencarbonate + 2 NH4(+). The protein operates within nitrogen metabolism; urea degradation; CO(2) and NH(3) from urea (urease route): step 1/1. This is Urease subunit beta from Mycobacterium bovis (strain BCG / Pasteur 1173P2).